The chain runs to 107 residues: Large ribosomal subunit protein bL21 (107 aa).

Belongs to the bacterial ribosomal protein bL21 family. In terms of assembly, part of the 50S ribosomal subunit. Contacts protein L20.

This protein binds to 23S rRNA in the presence of protein L20. The sequence is that of Large ribosomal subunit protein bL21 from Buchnera aphidicola subsp. Schizaphis graminum (strain Sg).